The chain runs to 402 residues: Tryptophan synthase beta chain (402 aa).

At Lys91 the chain carries N6-(pyridoxal phosphate)lysine.

Belongs to the TrpB family. As to quaternary structure, tetramer of two alpha and two beta chains. It depends on pyridoxal 5'-phosphate as a cofactor.

The enzyme catalyses (1S,2R)-1-C-(indol-3-yl)glycerol 3-phosphate + L-serine = D-glyceraldehyde 3-phosphate + L-tryptophan + H2O. It functions in the pathway amino-acid biosynthesis; L-tryptophan biosynthesis; L-tryptophan from chorismate: step 5/5. Functionally, the beta subunit is responsible for the synthesis of L-tryptophan from indole and L-serine. This chain is Tryptophan synthase beta chain (trpB), found in Lactococcus lactis subsp. lactis (strain IL1403) (Streptococcus lactis).